Consider the following 173-residue polypeptide: ATP synthase subunit b (173 aa).

A helical membrane pass occupies residues 15 to 35 (GVEWGTVIVQVLTFIVLLALL).

The protein belongs to the ATPase B chain family. As to quaternary structure, F-type ATPases have 2 components, F(1) - the catalytic core - and F(0) - the membrane proton channel. F(1) has five subunits: alpha(3), beta(3), gamma(1), delta(1), epsilon(1). F(0) has three main subunits: a(1), b(2) and c(10-14). The alpha and beta chains form an alternating ring which encloses part of the gamma chain. F(1) is attached to F(0) by a central stalk formed by the gamma and epsilon chains, while a peripheral stalk is formed by the delta and b chains.

It is found in the cell membrane. F(1)F(0) ATP synthase produces ATP from ADP in the presence of a proton or sodium gradient. F-type ATPases consist of two structural domains, F(1) containing the extramembraneous catalytic core and F(0) containing the membrane proton channel, linked together by a central stalk and a peripheral stalk. During catalysis, ATP synthesis in the catalytic domain of F(1) is coupled via a rotary mechanism of the central stalk subunits to proton translocation. Functionally, component of the F(0) channel, it forms part of the peripheral stalk, linking F(1) to F(0). This is ATP synthase subunit b from Staphylococcus aureus (strain MRSA252).